The primary structure comprises 334 residues: Galactosylgalactosylxylosylprotein 3-beta-glucuronosyltransferase 1 (334 aa).

Residues 1–6 are Cytoplasmic-facing; sequence MPKRRD. The tract at residues 3-5 is essential for transport from endoplasmic reticulum to Golgi apparatus and interaction with SAR1A; it reads KRR. Residues 7 to 27 traverse the membrane as a helical; Signal-anchor for type II membrane protein segment; that stretch reads ILAIVLIVLPWTLLITVWHQS. Topologically, residues 28 to 334 are lumenal; that stretch reads TLAPLLAVHK…KGFTDPSVEI (307 aa). The interval 37-56 is disordered; the sequence is KDEGSDPRRETPPGADPREY. 91–93 contributes to the UDP-alpha-D-glucuronate binding site; sequence PTY. Residues Thr-103 and Thr-108 each carry the phosphothreonine modification. Residue Asp-122 coordinates UDP-alpha-D-glucuronate. An N-linked (GlcNAc...) asparagine glycan is attached at Asn-140. UDP-alpha-D-glucuronate-binding residues include Arg-165 and Arg-170. A glycan (N-linked (GlcNAc...) asparagine) is linked at Asn-184. UDP-alpha-D-glucuronate is bound at residue 195 to 197; sequence DDD. Asp-197 is a Mn(2+) binding site. The tract at residues 245-254 is interaction with galactose moiety of substrate glycoprotein; sequence FDPHRPFAID. Glu-284 acts as the Proton donor/acceptor in catalysis. Asn-303 carries an N-linked (GlcNAc...) asparagine glycan. 311–313 contacts UDP-alpha-D-glucuronate; it reads HTR.

The protein belongs to the glycosyltransferase 43 family. Homodimer. Interacts with SAR1A. It depends on Mn(2+) as a cofactor. The soluble form derives from the membrane form by proteolytic processing. As to expression, mainly expressed in the brain.

The protein resides in the golgi apparatus membrane. It is found in the secreted. It localises to the endoplasmic reticulum membrane. The catalysed reaction is 3-O-(beta-D-galactosyl-(1-&gt;3)-beta-D-galactosyl-(1-&gt;4)-beta-D-xylosyl)-L-seryl-[protein] + UDP-alpha-D-glucuronate = 3-O-(beta-D-GlcA-(1-&gt;3)-beta-D-Gal-(1-&gt;3)-beta-D-Gal-(1-&gt;4)-beta-D-Xyl)-L-seryl-[protein] + UDP + H(+). The protein operates within protein modification; protein glycosylation. Functionally, involved in the biosynthesis of L2/HNK-1 carbohydrate epitope on glycoproteins. Can also play a role in glycosaminoglycan biosynthesis. Substrates include asialo-orosomucoid (ASOR), asialo-fetuin, and asialo-neural cell adhesion molecule. Requires sphingomyelin for activity: stearoyl-sphingomyelin was the most effective, followed by palmitoyl-sphingomyelin and lignoceroyl-sphingomyelin. Activity was demonstrated only for sphingomyelin with a saturated fatty acid and not for that with an unsaturated fatty acid, regardless of the length of the acyl group. This is Galactosylgalactosylxylosylprotein 3-beta-glucuronosyltransferase 1 from Homo sapiens (Human).